Consider the following 122-residue polypeptide: Large ribosomal subunit protein uL14 (122 aa).

Belongs to the universal ribosomal protein uL14 family. As to quaternary structure, part of the 50S ribosomal subunit. Forms a cluster with proteins L3 and L19. In the 70S ribosome, L14 and L19 interact and together make contacts with the 16S rRNA in bridges B5 and B8.

In terms of biological role, binds to 23S rRNA. Forms part of two intersubunit bridges in the 70S ribosome. This Mycolicibacterium vanbaalenii (strain DSM 7251 / JCM 13017 / BCRC 16820 / KCTC 9966 / NRRL B-24157 / PYR-1) (Mycobacterium vanbaalenii) protein is Large ribosomal subunit protein uL14.